Reading from the N-terminus, the 1127-residue chain is uncharacterized protein (1127 aa).

The first 26 residues, 1–26 (MRIHQRSAPCVPVLLFLFLPSAPLCA), serve as a signal peptide directing secretion. A disordered region spans residues 533–600 (ETESLSPPAD…ASSSPSEMAV (68 aa)). Low complexity-rich tracts occupy residues 536–549 (SLSPPADTASTPSP) and 583–599 (AGASEEADASSSPSEMA). Positions 1076 to 1126 (SEDEKEYQRALQELQKGNKLVASAVVEQLLQKDRNKKSAKIQQLKKRIDAQ) form a coiled coil.

This is an uncharacterized protein from Treponema pallidum (strain Nichols).